A 164-amino-acid polypeptide reads, in one-letter code: ATP synthase subunit b (164 aa).

The chain crosses the membrane as a helical span at residues 5–25; the sequence is IGELIGNFILVAGSFLLLIVL.

The protein belongs to the ATPase B chain family. As to quaternary structure, F-type ATPases have 2 components, F(1) - the catalytic core - and F(0) - the membrane proton channel. F(1) has five subunits: alpha(3), beta(3), gamma(1), delta(1), epsilon(1). F(0) has three main subunits: a(1), b(2) and c(10-14). The alpha and beta chains form an alternating ring which encloses part of the gamma chain. F(1) is attached to F(0) by a central stalk formed by the gamma and epsilon chains, while a peripheral stalk is formed by the delta and b chains.

The protein localises to the cell membrane. Its function is as follows. F(1)F(0) ATP synthase produces ATP from ADP in the presence of a proton or sodium gradient. F-type ATPases consist of two structural domains, F(1) containing the extramembraneous catalytic core and F(0) containing the membrane proton channel, linked together by a central stalk and a peripheral stalk. During catalysis, ATP synthesis in the catalytic domain of F(1) is coupled via a rotary mechanism of the central stalk subunits to proton translocation. Component of the F(0) channel, it forms part of the peripheral stalk, linking F(1) to F(0). The chain is ATP synthase subunit b from Streptococcus gordonii (strain Challis / ATCC 35105 / BCRC 15272 / CH1 / DL1 / V288).